Here is a 188-residue protein sequence, read N- to C-terminus: Segregation and condensation protein B (188 aa).

The protein belongs to the ScpB family. In terms of assembly, homodimer. Homodimerization may be required to stabilize the binding of ScpA to the Smc head domains. Component of a cohesin-like complex composed of ScpA, ScpB and the Smc homodimer, in which ScpA and ScpB bind to the head domain of Smc. The presence of the three proteins is required for the association of the complex with DNA.

The protein localises to the cytoplasm. Its function is as follows. Participates in chromosomal partition during cell division. May act via the formation of a condensin-like complex containing Smc and ScpA that pull DNA away from mid-cell into both cell halves. This Lactococcus lactis subsp. lactis (strain IL1403) (Streptococcus lactis) protein is Segregation and condensation protein B.